The chain runs to 97 residues: U-scoloptoxin(10)-Ssd2a (97 aa).

The first 23 residues, 1–23 (MNKSMLIFFTILFLTYIIEEKEA), serve as a signal peptide directing secretion.

In terms of processing, contains 3 disulfide bonds. Expressed by the venom gland.

The protein resides in the secreted. In Scolopendra dehaani (Thai centipede), this protein is U-scoloptoxin(10)-Ssd2a.